Here is an 83-residue protein sequence, read N- to C-terminus: Small ribosomal subunit protein bS20 (83 aa).

The tract at residues 60–83 is disordered; sequence ASKGLIHKNKASRDKSRLAAKLAN.

It belongs to the bacterial ribosomal protein bS20 family.

In terms of biological role, binds directly to 16S ribosomal RNA. In Streptococcus thermophilus (strain CNRZ 1066), this protein is Small ribosomal subunit protein bS20.